We begin with the raw amino-acid sequence, 218 residues long: Transmembrane gamma-carboxyglutamic acid protein 1 (218 aa).

Residues 1-20 (MGRVFLTGEKANSVLKRYPR) constitute a propeptide that is removed on maturation. Positions 20 to 66 (RANGFFEEIRQGNIERECKEEFCTFEEAREAFENNEKTKEFWSTYTK) constitute a Gla domain. Residues 21–80 (ANGFFEEIRQGNIERECKEEFCTFEEAREAFENNEKTKEFWSTYTKAQQGESNRGSDWFQ) lie on the Extracellular side of the membrane. Cys37 and Cys42 are disulfide-bonded. A helical membrane pass occupies residues 81 to 101 (FYLTFPLIFGLFIILLVIFLI). At 102–218 (WRCFLRNKTR…PMVPVVTTIK (117 aa)) the chain is on the cytoplasmic side. Positions 161–195 (TRLSNCDPPPTYEEATGQVNLQRSETEPHLDPPPE) are disordered.

In terms of processing, gla residues are produced after subsequent post-translational modifications of glutamate by a vitamin K-dependent gamma-carboxylase.

The protein localises to the membrane. In Pongo abelii (Sumatran orangutan), this protein is Transmembrane gamma-carboxyglutamic acid protein 1 (PRRG1).